A 305-amino-acid chain; its full sequence is MSQNSDTFDSGLQMEVHKMAEADNSSVQQKFDAIRDYIGRKETTIILCEHDDSRKIKLTLNKQRMESSMFLTEMPDGGIQEKTKFHRNGLAVCSYNAFDEVDLPLADSYIFYGLPSNVEAFPRMLHGIEKSAHKENKIVFIDIVVSILEKIQIKVVSFELYNRKCTVPTWVAELVITYCAPIEEQQQRIEEIRRTRASVPVAISDAANGSAEMVPSNTTGSSGSPMSTAPVPAAKKEKVQYESIRQIRPNAQGRYFVPARMINMDIEMSNDEYSPDESENDENEYDYENAARYDDGYDEGHEYCQ.

Disordered regions lie at residues 211–233 (AEMV…PVPA) and 267–305 (EMSN…EYCQ). Over residues 215-227 (PSNTTGSSGSPMS) the composition is skewed to polar residues. The span at 268–287 (MSNDEYSPDESENDENEYDY) shows a compositional bias: acidic residues. The segment covering 289–305 (NAARYDDGYDEGHEYCQ) has biased composition (basic and acidic residues).

As to expression, expressed throughout the male and female germline.

It is found in the nucleus. Plays a role in germline RNA interference (RNAi), and in particular is required for piwi-interacting RNA (piRNA) gene silencing. Facilitates the binding of the argonaut protein hrde-1 to small interfering RNAs (siRNAs) targets that are required for transgenerational epigenetic inheritance and germline immortality. The polypeptide is Protein hrde-2 (Caenorhabditis elegans).